A 277-amino-acid chain; its full sequence is Inositol monophosphatase 1 (277 aa).

Positions 70, 90, 92, and 93 each coordinate Mg(2+). Residue glutamate 70 coordinates substrate. Substrate contacts are provided by residues 92 to 95 (IDGT), 194 to 196 (GTA), glutamate 213, and aspartate 220. Residue aspartate 220 coordinates Mg(2+).

This sequence belongs to the inositol monophosphatase superfamily. As to quaternary structure, homodimer. Mg(2+) is required as a cofactor. Ubiquitous.

It localises to the cytoplasm. The catalysed reaction is a myo-inositol phosphate + H2O = myo-inositol + phosphate. The enzyme catalyses 1D-myo-inositol 1-phosphate + H2O = myo-inositol + phosphate. It carries out the reaction 1D-myo-inositol 2-phosphate + H2O = myo-inositol + phosphate. It catalyses the reaction 1D-myo-inositol 3-phosphate + H2O = myo-inositol + phosphate. The catalysed reaction is 1D-myo-inositol 4-phosphate + H2O = myo-inositol + phosphate. The enzyme catalyses 1D-myo-inositol 5-phosphate + H2O = myo-inositol + phosphate. It carries out the reaction 1D-myo-inositol 6-phosphate + H2O = myo-inositol + phosphate. It catalyses the reaction scyllo-inositol 1-phosphate + H2O = scyllo-inositol + phosphate. The catalysed reaction is alpha-D-galactose 1-phosphate + H2O = D-galactose + phosphate. The enzyme catalyses alpha-D-glucose 1-phosphate + H2O = D-glucose + phosphate. It carries out the reaction D-glucose 6-phosphate + H2O = D-glucose + phosphate. It catalyses the reaction beta-D-fructose 1-phosphate + H2O = D-fructose + phosphate. The catalysed reaction is glycerol 2-phosphate + H2O = glycerol + phosphate. The enzyme catalyses adenosine 2'-phosphate + H2O = adenosine + phosphate. Its pathway is polyol metabolism; myo-inositol biosynthesis; myo-inositol from D-glucose 6-phosphate: step 2/2. With respect to regulation, activity with myo-inositol monophosphate and D-galactose 1-phosphate is inhibited by Li(+), Ca(2+) and Mn(2+), but also by Mg(2+) at concentrations above 3 mM. Phosphatase involved in the dephosphorylation of myo-inositol monophosphate to generate myo-inositol. Is also able to dephosphorylate scyllo-inositol-phosphate, myo-inositol 1,4-diphosphate, scyllo-inositol-1,3-diphosphate and scyllo-inositol-1,4-diphosphate. Also dephosphorylates in vitro other sugar-phosphates including D-galactose-1-phosphate, glucose-1-phosphate, glucose-6-phosphate, fructose-1-phosphate, beta-glycerophosphate and 2'-AMP. Responsible for the provision of inositol required for synthesis of phosphatidylinositol and polyphosphoinositides, and involved in maintaining normal brain function. Has been implicated as the pharmacological target for lithium Li(+) action in brain. Is equally active with myo-inositol monophosphate and D-galactose 1-phosphate. The polypeptide is Inositol monophosphatase 1 (Impa1) (Rattus norvegicus (Rat)).